The following is a 213-amino-acid chain: Nicolin-1 (213 aa).

Part of the neuronal tubulin polyglutamylase complex which contains TPGS1, TPGS2, TTLL1, LRRC49 and NICN1. In terms of tissue distribution, high expression level is found in brain, testis, liver and kidney. Weak expression in spleen, leukocytes, small intestine and colon.

It is found in the nucleus. This chain is Nicolin-1 (NICN1), found in Homo sapiens (Human).